Here is a 135-residue protein sequence, read N- to C-terminus: MTYTTAKAAEKIGISAYTLRFYDKEGLLPNVGRDEYGNRRFTDKDLQWLSLLQCLKNTGMSLKDIKRFAECTIIGDDTIEERLSLFENQTKNVKCQIAELKRYLDLLEYKLAFYQKAKALGSVKAVNLPQIPETS.

One can recognise an HTH merR-type domain in the interval 2–71 (TYTTAKAAEK…LKDIKRFAEC (70 aa)). A DNA-binding region (H-T-H motif) is located at residues 5–24 (TAKAAEKIGISAYTLRFYDK).

This is an uncharacterized protein from Haemophilus influenzae (strain ATCC 51907 / DSM 11121 / KW20 / Rd).